The following is a 219-amino-acid chain: Uracil-DNA glycosylase (219 aa).

Asp-62 functions as the Proton acceptor in the catalytic mechanism.

Belongs to the uracil-DNA glycosylase (UDG) superfamily. UNG family.

It is found in the cytoplasm. It carries out the reaction Hydrolyzes single-stranded DNA or mismatched double-stranded DNA and polynucleotides, releasing free uracil.. Its function is as follows. Excises uracil residues from the DNA which can arise as a result of misincorporation of dUMP residues by DNA polymerase or due to deamination of cytosine. The polypeptide is Uracil-DNA glycosylase (Lactococcus lactis subsp. cremoris (strain MG1363)).